A 1549-amino-acid polypeptide reads, in one-letter code: ATP-binding cassette sub-family C member 9 (1549 aa).

Residues 1–30 (MSLSFCGNNISSYNINDGVLQNSCFVDALN) lie on the Extracellular side of the membrane. N-linked (GlcNAc...) asparagine glycosylation occurs at Asn9. Residues 31–51 (LVPHVFLLFITFPILFIGWGS) traverse the membrane as a helical segment. Topologically, residues 52-72 (QSSKVQIHHNTWLHFPGHNLR) are cytoplasmic. Residues 73-93 (WILTFALLFVHVCEIAEGIVS) form a helical membrane-spanning segment. Topologically, residues 94–101 (DSRRESRH) are extracellular. The chain crosses the membrane as a helical span at residues 102–122 (LHLFMPAVMGFVATTTSIVYY). Topologically, residues 123–132 (HNIETSNFPK) are cytoplasmic. A helical membrane pass occupies residues 133 to 153 (LLLALFLYWVMAFITKTIKLV). Residues 154–167 (KYCQSGLDISNLRF) lie on the Extracellular side of the membrane. The chain crosses the membrane as a helical span at residues 168–188 (CITGMMVILNGLLMAVEINVI). Residues 189–301 (RVRRYVFFMN…AFGRPILLSS (113 aa)) are Cytoplasmic-facing. An ABC transmembrane type-1 1 domain is found at 297–597 (ILLSSTFRYL…LSTVVRFAVK (301 aa)). Residues 302–322 (TFRYLADLLGFAGPLCISGIV) form a helical membrane-spanning segment. The Extracellular segment spans residues 323-350 (QRVNETQNGTNNTTGISETLSSKEFLEN). N-linked (GlcNAc...) asparagine glycosylation is found at Asn326, Asn330, Asn333, and Asn334. The chain crosses the membrane as a helical span at residues 351–371 (AYVLAVLLFLALILQRTFLQA). The Cytoplasmic segment spans residues 372 to 423 (SYYVTIETGINLRGALLAMIYNKILRLSTSNLSMGEMTLGQINNLVAIETNQ). Residues 424-444 (LMWFLFLCPNLWAMPVQIIMG) form a helical membrane-spanning segment. Over 445–455 (VILLYNLLGSS) the chain is Extracellular. A helical transmembrane segment spans residues 456-476 (ALVGAAVIVLLAPIQYFIATK). Residues 477-531 (LAEAQKSTLDYSTERLKKTNEILKGIKLLKLYAWEHIFCKSVEETRMKELSSLKT) lie on the Cytoplasmic side of the membrane. A helical membrane pass occupies residues 532 to 552 (FALYTSLSIFMNAAIPIAAVL). Residues 553 to 571 (ATFVTHAYASGNNLKPAEA) lie on the Extracellular side of the membrane. A helical membrane pass occupies residues 572-592 (FASLSLFHILVTPLFLLSTVV). Topologically, residues 593–990 (RFAVKAIISV…TCWRYLTSGG (398 aa)) are cytoplasmic. The ABC transporter 1 domain occupies 672 to 912 (IKVTNGYFSW…DVELYEHWKT (241 aa)). 705-712 (GQVGCGKS) provides a ligand contact to ATP. A disordered region spans residues 944 to 967 (REAKAQMEDEDEEEEEEEDEDDNM). Residues 951-966 (EDEDEEEEEEEDEDDN) are compositionally biased toward acidic residues. Residues 991–1011 (FFLLILMIFSKLLKHSVIVAI) form a helical membrane-spanning segment. The 281-residue stretch at 994–1274 (LILMIFSKLL…VVRNLADLEV (281 aa)) folds into the ABC transmembrane type-1 2 domain. Residues 1012-1034 (DYWLATWTSEYSINNTGKADQTY) are Extracellular-facing. The chain crosses the membrane as a helical span at residues 1035-1055 (YVAGFSILCGAGIFLCLVTSL). The Cytoplasmic segment spans residues 1056–1127 (TVEWMGLTAA…TLLCLSAIGM (72 aa)). Residues 1128-1148 (ISYATPVFLVALLPLGVAFYF) traverse the membrane as a helical segment. Topologically, residues 1149 to 1245 (IQKYFRVASK…IASISGSSNS (97 aa)) are extracellular. The helical transmembrane segment at 1246–1266 (GLVGLGLLYALTITNYLNWVV) threads the bilayer. The Cytoplasmic portion of the chain corresponds to 1267 to 1549 (RNLADLEVQM…LFSTLVMTNK (283 aa)). The ABC transporter 2 domain occupies 1312–1546 (IKIHDLCVRY…KNGLFSTLVM (235 aa)). 1346–1353 (GRTGSGKS) contacts ATP.

Belongs to the ABC transporter superfamily. ABCC family. Conjugate transporter (TC 3.A.1.208) subfamily. Interacts with KCNJ11. Interacts with KCNJ8.

The protein resides in the membrane. In terms of biological role, subunit of ATP-sensitive potassium channels (KATP). Can form cardiac and smooth muscle-type KATP channels with KCNJ11. KCNJ11 forms the channel pore while ABCC9 is required for activation and regulation. Can form a sulfonylurea-sensitive but ATP-insensitive potassium channel with KCNJ8. The chain is ATP-binding cassette sub-family C member 9 (ABCC9) from Homo sapiens (Human).